The chain runs to 199 residues: Rho-related protein racG (199 aa).

Residues Ala-13, Gly-15, Lys-16, Thr-17, Cys-18, Tyr-32, and Thr-35 each coordinate GTP. Thr-17 provides a ligand contact to Mg(2+). 2 short sequence motifs (switch) span residues 26-37 and 57-75; these read NAFPNEYIPTVF and DTAG…YPST. Position 35 (Thr-35) interacts with Mg(2+). Residues Lys-116, Asp-118, and Ala-159 each coordinate GTP. At Cys-196 the chain carries Cysteine methyl ester. Cys-196 carries the S-geranylgeranyl cysteine lipid modification. A propeptide spans 197-199 (removed in mature form); sequence SLF.

This sequence belongs to the small GTPase superfamily. Rho family. Mg(2+) serves as cofactor.

It localises to the cell membrane. The protein resides in the cytoplasm. It is found in the cytoskeleton. It catalyses the reaction GTP + H2O = GDP + phosphate + H(+). Regulated by guanine nucleotide exchange factors (GEFs) which promote the exchange of bound GDP for free GTP, GTPase activating proteins (GAPs) which increase the GTP hydrolysis activity, and GDP dissociation inhibitors which inhibit the dissociation of the nucleotide from the GTPase. Functionally, small GTPase which cycles between active GTP-bound and inactive GDP-bound states. Involved in actin cytoskeleton remodeling during capping of surface receptors and uroid formation. In Entamoeba histolytica (strain ATCC 30459 / HM-1:IMSS / ABRM), this protein is Rho-related protein racG.